A 283-amino-acid polypeptide reads, in one-letter code: Vitamin K epoxide reductase homolog (283 aa).

At 1–20 the chain is on the cytoplasmic side; it reads MASYLKLKAQEETWLQRHSR. The chain crosses the membrane as a helical span at residues 21 to 41; that stretch reads LILAILAGLGSLLTAYLTYTK. Residues 42-66 are Periplasmic-facing; that stretch reads LTEQPAAFCTGDGGCDLVLSSRWAE. An intrachain disulfide couples Cys-50 to Cys-56. 59 to 65 lines the a quinone pocket; that stretch reads VLSSRWA. The chain crosses the membrane as a helical span at residues 67–87; it reads FLGIPTAAVGLLGFLGVLALA. Residues 88–102 lie on the Cytoplasmic side of the membrane; sequence VLPDGLPLVKRWRWP. The chain crosses the membrane as a helical span at residues 103–123; it reads ALFGLVSAMTAFEMYMLYLMV. Residue 111 to 122 coordinates a quinone; it reads MTAFEMYMLYLM. Over 124 to 128 the chain is Periplasmic; the sequence is AVLRQ. The chain crosses the membrane as a helical span at residues 129-149; that stretch reads FCMYCTTAIILVAGLGLVTVL. The cysteines at positions 130 and 133 are disulfide-linked. Over 150-158 the chain is Cytoplasmic; it reads GHRWLDGGK. Residues 159-179 form a helical membrane-spanning segment; the sequence is LAFSYILVAFLTLVTTIGVYA. Topologically, residues 180 to 283 are periplasmic; sequence NQVPPPSPLA…ASGYPLEEGR (104 aa). The tract at residues 186–283 is thioredoxin-like domain; that stretch reads SPLAVGLAAH…ASGYPLEEGR (98 aa). Disulfide bonds link Cys-209–Cys-212 and Cys-231–Cys-244.

This sequence belongs to the VKOR family.

The protein localises to the membrane. With respect to regulation, inhibited by ferulenol. In terms of biological role, thiol-disulfide oxidoreductase that catalyzes vitamin K-dependent disulfide bond formation in periplasmic target proteins. The polypeptide is Vitamin K epoxide reductase homolog (Synechococcus sp. (strain JA-2-3B'a(2-13)) (Cyanobacteria bacterium Yellowstone B-Prime)).